We begin with the raw amino-acid sequence, 752 residues long: MRFVSLAVGAALLGAAGASSISSNVGLLKANGVALGNWEAAYEKASAFVSGLTTDQKLALITGSNVESANGNFTPLYFLDGDMGLQDFYYVSAFSLSSALAMTWDRDAIYEQAKAVGSEFYNKGVQVVAGPTSQPLGRTPWGGRGVEGFGPDPYLNGLATGLTTKGYVDAGVIPGGKHFLLYEQETNRTSSFGSSGEGSPYSSNADDKTIHETYLWPFYDAVKNGAGAVMCAMTKVNGTMACENSDLLMKMLKTELGFPGMVWPDMNGQNSAKGSALGGEDYGSSSIWSTSTMESFLSNGTLSEARLNDMAIRNLIGYYYVNLDNGRQPTRQTTDVYVDVRANHSKLIRENGAKSMALLKNEGVLPLSKPHVMSIFGAHAGPIMGGPNSNVDVMGSGPTYQGHLATGSGSGMASMPYLITPYDALTNKAAQDGTVLRWVLNDTYSSGGGSSLVPSSTSSTAVEPSFENFATGSDICLVFINALAGEGADRTELYNADQDAMVNTVADNCNNTVAVVNTVGPRLLDQWIEHDNVTAVLYGSLLGQESGNSIVDLLYGDVNPSGRLVHTIAKNESDYNVGLCYTAQCNFTEGVYLDYRYFDAHNITPRYPFGHGLSYTTFHYSSLAIKAPSSITKAPKGNLTVGGPSDLWDVVGTVSARIANNGTLSGAEVPQLYLGFPDSADQPVRQLRGFDRVELSAGQEAVVTFNLRRRDISYWNLKTQQWMVAGGKYTVFVGGSSRDLRLNGTFFLWVGS.

Positions 1 to 18 are cleaved as a signal peptide; that stretch reads MRFVSLAVGAALLGAAGA. Residues asparagine 187 and asparagine 237 are each glycosylated (N-linked (GlcNAc...) asparagine). The active site involves aspartate 265. N-linked (GlcNAc...) asparagine glycans are attached at residues asparagine 299, asparagine 343, asparagine 441, asparagine 510, asparagine 532, asparagine 571, asparagine 586, asparagine 638, asparagine 661, and asparagine 743.

This sequence belongs to the glycosyl hydrolase 3 family.

Its subcellular location is the secreted. It carries out the reaction Hydrolysis of terminal, non-reducing beta-D-glucosyl residues with release of beta-D-glucose.. The protein operates within glycan metabolism; cellulose degradation. Its function is as follows. Beta-glucosidases are one of a number of cellulolytic enzymes involved in the degradation of cellulosic biomass. Catalyzes the last step releasing glucose from the inhibitory cellobiose. In Aspergillus oryzae (strain ATCC 42149 / RIB 40) (Yellow koji mold), this protein is Probable beta-glucosidase D (bglD).